The chain runs to 401 residues: Homoserine O-acetyltransferase (401 aa).

The 322-residue stretch at N37 to P358 folds into the AB hydrolase-1 domain. S146 acts as the Nucleophile in catalysis. R215 serves as a coordination point for substrate. Catalysis depends on residues D318 and H351. D352 is a substrate binding site.

Belongs to the AB hydrolase superfamily. MetX family. In terms of assembly, homodimer.

Its subcellular location is the cytoplasm. It carries out the reaction L-homoserine + acetyl-CoA = O-acetyl-L-homoserine + CoA. The protein operates within amino-acid biosynthesis; L-methionine biosynthesis via de novo pathway; O-acetyl-L-homoserine from L-homoserine: step 1/1. In terms of biological role, transfers an acetyl group from acetyl-CoA to L-homoserine, forming acetyl-L-homoserine. This is Homoserine O-acetyltransferase from Natronomonas pharaonis (strain ATCC 35678 / DSM 2160 / CIP 103997 / JCM 8858 / NBRC 14720 / NCIMB 2260 / Gabara) (Halobacterium pharaonis).